The following is a 154-amino-acid chain: Endoribonuclease YbeY (154 aa).

Zn(2+) contacts are provided by histidine 117, histidine 121, and histidine 127.

Belongs to the endoribonuclease YbeY family. The cofactor is Zn(2+).

It is found in the cytoplasm. Its function is as follows. Single strand-specific metallo-endoribonuclease involved in late-stage 70S ribosome quality control and in maturation of the 3' terminus of the 16S rRNA. The chain is Endoribonuclease YbeY from Polaromonas sp. (strain JS666 / ATCC BAA-500).